The sequence spans 155 residues: SsrA-binding protein (155 aa).

This sequence belongs to the SmpB family.

The protein localises to the cytoplasm. In terms of biological role, required for rescue of stalled ribosomes mediated by trans-translation. Binds to transfer-messenger RNA (tmRNA), required for stable association of tmRNA with ribosomes. tmRNA and SmpB together mimic tRNA shape, replacing the anticodon stem-loop with SmpB. tmRNA is encoded by the ssrA gene; the 2 termini fold to resemble tRNA(Ala) and it encodes a 'tag peptide', a short internal open reading frame. During trans-translation Ala-aminoacylated tmRNA acts like a tRNA, entering the A-site of stalled ribosomes, displacing the stalled mRNA. The ribosome then switches to translate the ORF on the tmRNA; the nascent peptide is terminated with the 'tag peptide' encoded by the tmRNA and targeted for degradation. The ribosome is freed to recommence translation, which seems to be the essential function of trans-translation. The polypeptide is SsrA-binding protein (Streptococcus equi subsp. zooepidemicus (strain H70)).